Consider the following 257-residue polypeptide: Chlorocatechol 1,2-dioxygenase (257 aa).

The Fe cation site is built by Tyr134, Tyr169, His194, and His196.

The protein belongs to the intradiol ring-cleavage dioxygenase family. Fe(3+) is required as a cofactor.

The enzyme catalyses 4-chlorocatechol + O2 = 3-chloro-cis,cis-muconate + 2 H(+). It carries out the reaction 3,5-dichlorocatechol + O2 = (2E,4E)-2,4-dichloromuconate + 2 H(+). The chain is Chlorocatechol 1,2-dioxygenase (clcA) from Rhodococcus opacus (Nocardia opaca).